The following is a 563-amino-acid chain: Ras and Rab interactor-like protein (563 aa).

The tract at residues Gly-181–His-208 is disordered. The segment covering Thr-184 to Gln-196 has biased composition (low complexity). A VPS9 domain is found at Ala-381–Arg-518. The segment at Thr-539–Pro-563 is disordered. The segment covering Gln-542 to Pro-553 has biased composition (low complexity).

As to quaternary structure, interacts with RAB5A, RAB22A and MUSK. Detected in thymus and spleen (at protein level). Detected in lung, liver, kidney, spleen, thymus and skeletal muscle.

The protein localises to the cell projection. It is found in the ruffle. The protein resides in the cytoplasmic vesicle. Guanine nucleotide exchange factor (GEF) for RAB5A and RAB22A that activates RAB5A and RAB22A by exchanging bound GDP for free GTP. Plays a role in endocytosis via its role in activating Rab family members. This is Ras and Rab interactor-like protein (Rinl) from Mus musculus (Mouse).